A 431-amino-acid polypeptide reads, in one-letter code: Putative helicase 055L (431 aa).

Residues 73–222 (WGHVTSKGYC…ALGAFFGRED (150 aa)) enclose the Helicase ATP-binding domain. 86 to 93 (CPPGFGKT) provides a ligand contact to ATP. The DEAH box signature appears at 175–178 (DEAH). The disordered stretch occupies residues 403 to 431 (KCDASRPSQSTPTPTGSSQPAPRTRRPQR). The span at 407–424 (SRPSQSTPTPTGSSQPAP) shows a compositional bias: low complexity.

This is Putative helicase 055L from Frog virus 3 (isolate Goorha) (FV-3).